Here is a 147-residue protein sequence, read N- to C-terminus: Large ribosomal subunit protein bL21 (147 aa).

Positions 125–147 (EEVEAAPKAKKAAPKAKKEATKE) are disordered.

This sequence belongs to the bacterial ribosomal protein bL21 family. Part of the 50S ribosomal subunit. Contacts protein L20.

Its function is as follows. This protein binds to 23S rRNA in the presence of protein L20. In Flavobacterium johnsoniae (strain ATCC 17061 / DSM 2064 / JCM 8514 / BCRC 14874 / CCUG 350202 / NBRC 14942 / NCIMB 11054 / UW101) (Cytophaga johnsonae), this protein is Large ribosomal subunit protein bL21.